The chain runs to 174 residues: Probable NAD(P)H dehydrogenase subunit CRR3, chloroplastic (174 aa).

The N-terminal 54 residues, 1–54 (MAVLSTIYSITRASTPTMASLTNDSPSPLPSSSPSKLPSPTSPSKKPLKLRQVS), are a transit peptide targeting the chloroplast. Residues 14-24 (STPTMASLTND) show a composition bias toward polar residues. Residues 14 to 71 (STPTMASLTNDSPSPLPSSSPSKLPSPTSPSKKPLKLRQVSKQMGSQNQQRRGNKPSI) are disordered. The span at 30-45 (PSSSPSKLPSPTSPSK) shows a compositional bias: low complexity. The segment covering 53–64 (VSKQMGSQNQQR) has biased composition (polar residues). A helical membrane pass occupies residues 140–160 (FTIQWILPIWIMSLLVACGVI).

It localises to the plastid. The protein localises to the chloroplast thylakoid membrane. Functionally, probable subunit of the chloroplast NAD(P)H dehydrogenase (NDH) complex of the photosynthetic electron transport chain. Required for both formation and activity of NDH. May function in assembly or stabilization of the NDH complex. This chain is Probable NAD(P)H dehydrogenase subunit CRR3, chloroplastic, found in Arabidopsis thaliana (Mouse-ear cress).